The following is an 83-amino-acid chain: ATP synthase subunit c (83 aa).

2 helical membrane-spanning segments follow: residues 10–30 (IAVA…FGLL) and 52–72 (MFIV…IALF).

The protein belongs to the ATPase C chain family. F-type ATPases have 2 components, F(1) - the catalytic core - and F(0) - the membrane proton channel. F(1) has five subunits: alpha(3), beta(3), gamma(1), delta(1), epsilon(1). F(0) has three main subunits: a(1), b(2) and c(10-14). The alpha and beta chains form an alternating ring which encloses part of the gamma chain. F(1) is attached to F(0) by a central stalk formed by the gamma and epsilon chains, while a peripheral stalk is formed by the delta and b chains.

The protein resides in the cell inner membrane. F(1)F(0) ATP synthase produces ATP from ADP in the presence of a proton or sodium gradient. F-type ATPases consist of two structural domains, F(1) containing the extramembraneous catalytic core and F(0) containing the membrane proton channel, linked together by a central stalk and a peripheral stalk. During catalysis, ATP synthesis in the catalytic domain of F(1) is coupled via a rotary mechanism of the central stalk subunits to proton translocation. In terms of biological role, key component of the F(0) channel; it plays a direct role in translocation across the membrane. A homomeric c-ring of between 10-14 subunits forms the central stalk rotor element with the F(1) delta and epsilon subunits. This chain is ATP synthase subunit c, found in Shewanella loihica (strain ATCC BAA-1088 / PV-4).